Consider the following 272-residue polypeptide: 4-hydroxy-tetrahydrodipicolinate reductase (272 aa).

Residues 10 to 15, Glu36, 100 to 102, and 124 to 127 contribute to the NAD(+) site; these read GAGGRM, GTT, and SGNM. His157 (proton donor/acceptor) is an active-site residue. His158 is a (S)-2,3,4,5-tetrahydrodipicolinate binding site. Residue Lys161 is the Proton donor of the active site. 167 to 168 is a (S)-2,3,4,5-tetrahydrodipicolinate binding site; it reads GT.

Belongs to the DapB family.

It is found in the cytoplasm. It catalyses the reaction (S)-2,3,4,5-tetrahydrodipicolinate + NAD(+) + H2O = (2S,4S)-4-hydroxy-2,3,4,5-tetrahydrodipicolinate + NADH + H(+). It carries out the reaction (S)-2,3,4,5-tetrahydrodipicolinate + NADP(+) + H2O = (2S,4S)-4-hydroxy-2,3,4,5-tetrahydrodipicolinate + NADPH + H(+). It participates in amino-acid biosynthesis; L-lysine biosynthesis via DAP pathway; (S)-tetrahydrodipicolinate from L-aspartate: step 4/4. In terms of biological role, catalyzes the conversion of 4-hydroxy-tetrahydrodipicolinate (HTPA) to tetrahydrodipicolinate. In Afipia carboxidovorans (strain ATCC 49405 / DSM 1227 / KCTC 32145 / OM5) (Oligotropha carboxidovorans), this protein is 4-hydroxy-tetrahydrodipicolinate reductase.